Here is an 873-residue protein sequence, read N- to C-terminus: Leucine--tRNA ligase (873 aa).

Residues 43 to 53 carry the 'HIGH' region motif; the sequence is PYPSGSLHMGH. Positions 624–628 match the 'KMSKS' region motif; it reads TMSKS. Lys-627 lines the ATP pocket.

It belongs to the class-I aminoacyl-tRNA synthetase family.

The protein resides in the cytoplasm. The catalysed reaction is tRNA(Leu) + L-leucine + ATP = L-leucyl-tRNA(Leu) + AMP + diphosphate. This Synechococcus sp. (strain JA-3-3Ab) (Cyanobacteria bacterium Yellowstone A-Prime) protein is Leucine--tRNA ligase.